Here is a 702-residue protein sequence, read N- to C-terminus: Serotransferrin-A (702 aa).

An N-terminal signal peptide occupies residues 1-19 (MDLSLRVALCLSMLALCLA). Transferrin-like domains are found at residues 26–340 (VRWC…ALKE) and 353–685 (VRWC…SLNK). Cystine bridges form between Cys-29–Cys-64 and Cys-39–Cys-55. Asp-79 and Tyr-111 together coordinate Fe(3+). Cystine bridges form between Cys-134–Cys-217, Cys-179–Cys-192, and Cys-245–Cys-259. Hydrogencarbonate is bound by residues Thr-136, Lys-140, Ala-142, and Gly-143. Residue Tyr-211 participates in Fe(3+) binding. Fe(3+) is bound at residue His-267. The interval 340-349 (EGVKEDDSAA) is connecting region. 2 disulfide bridges follow: Cys-356–Cys-388 and Cys-366–Cys-379. Fe(3+) contacts are provided by Asp-403 and Tyr-442. Disulfide bonds link Cys-413/Cys-697, Cys-431/Cys-658, Cys-465/Cys-544, Cys-489/Cys-686, Cys-499/Cys-513, Cys-510/Cys-527, and Cys-584/Cys-598. Hydrogencarbonate is bound by residues Thr-467, Arg-471, Ala-473, and Gly-474. Residue Tyr-538 participates in Fe(3+) binding. His-606 contacts Fe(3+).

It belongs to the transferrin family. Monomer. As to expression, plasma.

The protein resides in the secreted. In terms of biological role, transferrins are iron binding transport proteins which can bind two Fe(3+) ions in association with the binding of an anion, usually bicarbonate. It is responsible for the transport of iron from sites of absorption and heme degradation to those of storage and utilization. Serum transferrin may also have a further role in stimulating cell proliferation. The sequence is that of Serotransferrin-A (tf-a) from Xenopus laevis (African clawed frog).